Here is a 351-residue protein sequence, read N- to C-terminus: Peptide chain release factor 1 (351 aa).

Gln-233 bears the N5-methylglutamine mark.

The protein belongs to the prokaryotic/mitochondrial release factor family. Methylated by PrmC. Methylation increases the termination efficiency of RF1.

Its subcellular location is the cytoplasm. Its function is as follows. Peptide chain release factor 1 directs the termination of translation in response to the peptide chain termination codons UAG and UAA. The polypeptide is Peptide chain release factor 1 (prfA) (Treponema pallidum (strain Nichols)).